The chain runs to 514 residues: Steroid 17-alpha-hydroxylase/17,20 lyase (514 aa).

Cysteine 445 contributes to the heme binding site.

It belongs to the cytochrome P450 family. It depends on heme as a cofactor.

It localises to the membrane. The catalysed reaction is a C21-steroid + reduced [NADPH--hemoprotein reductase] + O2 = a 17alpha-hydroxy-C21-steroid + oxidized [NADPH--hemoprotein reductase] + H2O + H(+). It catalyses the reaction 17alpha-hydroxyprogesterone + reduced [NADPH--hemoprotein reductase] + O2 = androst-4-ene-3,17-dione + acetate + oxidized [NADPH--hemoprotein reductase] + H2O + 2 H(+). The enzyme catalyses 17alpha-hydroxypregnenolone + reduced [NADPH--hemoprotein reductase] + O2 = 3beta-hydroxyandrost-5-en-17-one + acetate + oxidized [NADPH--hemoprotein reductase] + H2O + 2 H(+). The protein operates within lipid metabolism; steroid biosynthesis. Functionally, conversion of pregnenolone and progesterone to their 17-alpha-hydroxylated products and subsequently to dehydroepiandrosterone (DHEA) and androstenedione. Catalyzes both the 17-alpha-hydroxylation and the 17,20-lyase reaction. This Ictalurus punctatus (Channel catfish) protein is Steroid 17-alpha-hydroxylase/17,20 lyase (cyp17a1).